Consider the following 290-residue polypeptide: Eukaryotic translation initiation factor 3 subunit G (290 aa).

Residues 1–34 (MSRLGNRAADWADDEEFDDPSALPAQQVTTNKDG) form a disordered region. The region spanning 210–288 (ATLRVTNVSE…LILRVEFAKR (79 aa)) is the RRM domain.

Belongs to the eIF-3 subunit G family. As to quaternary structure, component of the eukaryotic translation initiation factor 3 (eIF-3) complex.

It is found in the cytoplasm. Its function is as follows. RNA-binding component of the eukaryotic translation initiation factor 3 (eIF-3) complex, which is involved in protein synthesis of a specialized repertoire of mRNAs and, together with other initiation factors, stimulates binding of mRNA and methionyl-tRNAi to the 40S ribosome. The eIF-3 complex specifically targets and initiates translation of a subset of mRNAs involved in cell proliferation. This subunit can bind 18S rRNA. The protein is Eukaryotic translation initiation factor 3 subunit G of Neosartorya fischeri (strain ATCC 1020 / DSM 3700 / CBS 544.65 / FGSC A1164 / JCM 1740 / NRRL 181 / WB 181) (Aspergillus fischerianus).